The primary structure comprises 119 residues: Autophagy-related protein 8h (119 aa).

Residue Gly-119 is the site of Phosphatidylethanolamine amidated glycine attachment.

Belongs to the ATG8 family. Interacts with ATG4. Interacts with ATI1. Gly-119 forms then a thioester bond with the 'Cys-558' of ATG7 (E1-like activating enzyme) before being transferred to the 'Cys-258' of ATG3 (the specific E2 conjugating enzyme), in order to be finally amidated with phosphatidylethanolamine. This lipid modification anchors ATG8 to autophagosomes. Constitutively expressed.

The protein resides in the cytoplasmic vesicle. The protein localises to the autophagosome membrane. It is found in the vacuole membrane. Its subcellular location is the cytoplasm. It localises to the cytoskeleton. Functionally, ubiquitin-like modifier involved in autophagosomes formation. May mediate the delivery of the autophagosomes to the vacuole via the microtubule cytoskeleton. This chain is Autophagy-related protein 8h (ATG8H), found in Arabidopsis thaliana (Mouse-ear cress).